A 241-amino-acid polypeptide reads, in one-letter code: Glucosamine-6-phosphate deaminase (241 aa).

The active-site Proton acceptor; for enolization step is Asp67. Catalysis depends on Asn136, which acts as the For ring-opening step. His138 functions as the Proton acceptor; for ring-opening step in the catalytic mechanism. The active-site For ring-opening step is Glu143.

It belongs to the glucosamine/galactosamine-6-phosphate isomerase family. NagB subfamily.

The enzyme catalyses alpha-D-glucosamine 6-phosphate + H2O = beta-D-fructose 6-phosphate + NH4(+). It functions in the pathway amino-sugar metabolism; N-acetylneuraminate degradation; D-fructose 6-phosphate from N-acetylneuraminate: step 5/5. Functionally, catalyzes the reversible isomerization-deamination of glucosamine 6-phosphate (GlcN6P) to form fructose 6-phosphate (Fru6P) and ammonium ion. This Clostridium tetani (strain Massachusetts / E88) protein is Glucosamine-6-phosphate deaminase.